Reading from the N-terminus, the 221-residue chain is Membrane protein 0 (221 aa).

The segment at Met-1–Gly-22 is disordered. Positions Pro-44–Tyr-47 match the PPXY motif motif. A helical transmembrane segment spans residues Phe-100–Phe-120.

This sequence belongs to the varicellovirus ORF0 protein family. In terms of assembly, interacts with host ITCH; this interaction probably mediates ITCH degradation.

Its subcellular location is the host Golgi apparatus membrane. The chain is Membrane protein 0 from Homo sapiens (Human).